Reading from the N-terminus, the 335-residue chain is Dihydroorotate dehydrogenase (quinone) (335 aa).

FMN-binding positions include 58 to 62 (AGADK) and Thr82. Lys62 contributes to the substrate binding site. 107-111 (NRNGF) contacts substrate. 2 residues coordinate FMN: Asn135 and Asn168. Residue Asn168 coordinates substrate. Ser171 serves as the catalytic Nucleophile. Asn173 provides a ligand contact to substrate. FMN-binding residues include Lys213 and Gly241. 242-243 (NT) contacts substrate. FMN is bound by residues Gly264, Gly293, and 314–315 (YS).

Belongs to the dihydroorotate dehydrogenase family. Type 2 subfamily. Monomer. Requires FMN as cofactor.

It is found in the cell membrane. It carries out the reaction (S)-dihydroorotate + a quinone = orotate + a quinol. It functions in the pathway pyrimidine metabolism; UMP biosynthesis via de novo pathway; orotate from (S)-dihydroorotate (quinone route): step 1/1. Its function is as follows. Catalyzes the conversion of dihydroorotate to orotate with quinone as electron acceptor. The polypeptide is Dihydroorotate dehydrogenase (quinone) (Actinobacillus pleuropneumoniae serotype 3 (strain JL03)).